The sequence spans 379 residues: Guanine nucleotide-binding protein G(s) subunit alpha (379 aa).

Residues 38–379 enclose the G-alpha domain; the sequence is STHRLLLLGA…RMHLRQYELL (342 aa). Residues 41 to 54 form a G1 motif region; it reads RLLLLGAGESGKST. GTP contacts are provided by residues 46–53, 182–188, 207–211, 276–279, and Ala351; these read GAGESGKS, LRCRVLT, DVGGQ, and NKQD. Ser53 and Thr188 together coordinate Mg(2+). A G2 motif region spans residues 180 to 188; it reads DILRCRVLT. The G3 motif stretch occupies residues 203–212; it reads FHMFDVGGQR. Residues 272–279 form a G4 motif region; it reads ILFLNKQD. The tract at residues 349–354 is G5 motif; that stretch reads TCAVDT.

This sequence belongs to the G-alpha family. G(s) subfamily. G proteins are composed of 3 units; alpha, beta and gamma. The alpha chain contains the guanine nucleotide binding site.

Guanine nucleotide-binding proteins (G proteins) are involved as modulators or transducers in various transmembrane signaling systems. The G(s) protein is involved in hormonal regulation of adenylate cyclase: it activates the cyclase in response to beta-adrenergic stimuli. This chain is Guanine nucleotide-binding protein G(s) subunit alpha, found in Schistosoma mansoni (Blood fluke).